A 177-amino-acid chain; its full sequence is Probable inosine/xanthosine triphosphatase (177 aa).

Belongs to the YjjX NTPase family. As to quaternary structure, homodimer. Mg(2+) serves as cofactor. It depends on Mn(2+) as a cofactor.

It carries out the reaction XTP + H2O = XDP + phosphate + H(+). The enzyme catalyses ITP + H2O = IDP + phosphate + H(+). Phosphatase that hydrolyzes non-canonical purine nucleotides such as XTP and ITP to their respective diphosphate derivatives. Probably excludes non-canonical purines from DNA/RNA precursor pool, thus preventing their incorporation into DNA/RNA and avoiding chromosomal lesions. The sequence is that of Probable inosine/xanthosine triphosphatase from Halalkalibacterium halodurans (strain ATCC BAA-125 / DSM 18197 / FERM 7344 / JCM 9153 / C-125) (Bacillus halodurans).